Reading from the N-terminus, the 425-residue chain is 2-methylserine hydroxymethyltransferase (425 aa).

Residues Leu-126 and 130–132 contribute to the (6S)-5,6,7,8-tetrahydrofolate site; that span reads GHL. Residue Lys-235 is modified to N6-(pyridoxal phosphate)lysine. Glu-251 serves as a coordination point for (6S)-5,6,7,8-tetrahydrofolate.

The protein belongs to the SHMT family. As to quaternary structure, homodimer. Pyridoxal 5'-phosphate is required as a cofactor.

It localises to the cytoplasm. It carries out the reaction (6R)-5,10-methylene-5,6,7,8-tetrahydrofolate + D-alanine + H2O = 2-methylserine + (6S)-5,6,7,8-tetrahydrofolate. It functions in the pathway one-carbon metabolism; tetrahydrofolate interconversion. With respect to regulation, inhibited by hydroxylamine and sodium borohydride. Catalyzes the reversible interconversion of alpha-methyl-L-serine to D-alanine with tetrahydrofolate (THF) serving as the one-carbon carrier. Cannot use alpha-methyl-D-serine, L-serine, D-serine or L-alanine. The sequence is that of 2-methylserine hydroxymethyltransferase from Paracoccus sp.